The chain runs to 137 residues: Large ribosomal subunit protein uL16 (137 aa).

The protein belongs to the universal ribosomal protein uL16 family. As to quaternary structure, part of the 50S ribosomal subunit.

Functionally, binds 23S rRNA and is also seen to make contacts with the A and possibly P site tRNAs. This is Large ribosomal subunit protein uL16 from Rhodopseudomonas palustris (strain BisB5).